A 202-amino-acid chain; its full sequence is Probable adenylyl-sulfate kinase (202 aa).

36–43 (GLSGSGKS) is an ATP binding site. The Phosphoserine intermediate role is filled by Ser110.

This sequence belongs to the APS kinase family.

It catalyses the reaction adenosine 5'-phosphosulfate + ATP = 3'-phosphoadenylyl sulfate + ADP + H(+). The protein operates within sulfur metabolism; hydrogen sulfide biosynthesis; sulfite from sulfate: step 2/3. Its function is as follows. Catalyzes the synthesis of activated sulfate. The protein is Probable adenylyl-sulfate kinase of Halalkalibacterium halodurans (strain ATCC BAA-125 / DSM 18197 / FERM 7344 / JCM 9153 / C-125) (Bacillus halodurans).